We begin with the raw amino-acid sequence, 544 residues long: Glucans biosynthesis protein G (544 aa).

An N-terminal signal peptide occupies residues 1–34 (MVSLLRCQSSKPYSSLICSLALGVAFALSGTAYA).

Belongs to the OpgD/OpgG family.

The protein localises to the periplasm. The protein operates within glycan metabolism; osmoregulated periplasmic glucan (OPG) biosynthesis. In terms of biological role, involved in the biosynthesis of osmoregulated periplasmic glucans (OPGs). This is Glucans biosynthesis protein G from Shewanella putrefaciens (strain CN-32 / ATCC BAA-453).